We begin with the raw amino-acid sequence, 104 residues long: Large ribosomal subunit protein uL24 (104 aa).

This sequence belongs to the universal ribosomal protein uL24 family. In terms of assembly, part of the 50S ribosomal subunit.

One of two assembly initiator proteins, it binds directly to the 5'-end of the 23S rRNA, where it nucleates assembly of the 50S subunit. In terms of biological role, one of the proteins that surrounds the polypeptide exit tunnel on the outside of the subunit. The protein is Large ribosomal subunit protein uL24 of Shewanella halifaxensis (strain HAW-EB4).